The following is a 329-amino-acid chain: Cytosolic arginine sensor for mTORC1 subunit 2 (329 aa).

2 ACT domains span residues 72 to 140 (ADAT…HTLS) and 262 to 322 (ELWK…SALK).

This sequence belongs to the GATS family. Forms homodimers and heterodimers with CASTOR1. Interacts with the GATOR2 complex which is composed of MIOS, SEC13, SEH1L, WDR24 and WDR59; the interaction is not regulated by arginine. In terms of tissue distribution, widely expressed.

It localises to the cytoplasm. The protein resides in the cytosol. Functionally, functions as a negative regulator of the TORC1 signaling pathway through the GATOR complex. As part of homodimers or heterodimers with CASTOR1, directly binds and inhibits the GATOR subcomplex GATOR2 and thereby mTORC1. Does not directly bind arginine, but binding of arginine to CASTOR1 disrupts the interaction of CASTOR2-containing heterodimers with GATOR2 which can in turn activate mTORC1 and the TORC1 signaling pathway. This Homo sapiens (Human) protein is Cytosolic arginine sensor for mTORC1 subunit 2.